The sequence spans 299 residues: Regucalcin (299 aa).

Glu18 contributes to the a divalent metal cation binding site. The substrate site is built by Arg101, Asn103, and Glu121. Lys144 carries the post-translational modification N6-succinyllysine. Asn154 and Asp204 together coordinate a divalent metal cation. Residue Asp204 is the Proton donor/acceptor of the active site. An N6-succinyllysine mark is found at Lys244 and Lys253. Phosphoserine is present on Ser268.

The protein belongs to the SMP-30/CGR1 family. Monomer. Requires Zn(2+) as cofactor. The cofactor is Mn(2+). Ca(2+) is required as a cofactor. Mg(2+) serves as cofactor. It depends on Co(2+) as a cofactor. Post-translationally, the N-terminus is blocked. In terms of tissue distribution, detected in liver (at protein level). Hepatocytes and renal proximal tubular epithelium.

It localises to the cytoplasm. The enzyme catalyses D-glucono-1,5-lactone + H2O = D-gluconate + H(+). Its pathway is cofactor biosynthesis; L-ascorbate biosynthesis via UDP-alpha-D-glucuronate pathway; L-ascorbate from UDP-alpha-D-glucuronate: step 3/4. Gluconolactonase with low activity towards other sugar lactones, including gulonolactone and galactonolactone. Catalyzes a key step in ascorbic acid (vitamin C) biosynthesis. Can also hydrolyze diisopropyl phosphorofluoridate and phenylacetate (in vitro). Calcium-binding protein. Modulates Ca(2+) signaling, and Ca(2+)-dependent cellular processes and enzyme activities. The chain is Regucalcin (Rgn) from Rattus norvegicus (Rat).